The following is a 362-amino-acid chain: MEGKFAISESTNLLQRIKDFTQSVVVDLAEGRSPKISINQFRNYCMNPEADCLCSSDKPKGQEIFTLKKEPQTYRIDMLLRVLLIVQQLLQENRHASKRDIYYMHPSAFKAQSIVDRAIGDICILFQCSRYNLNVVSVGNGLVMGWLKFREAGRKFDCLNSLNTAYPVPVLVEEVEDIVSLAEYILVVEKETVFQRLANDMFCKTNRCIVITGRGYPDVSTRRFLRLLMEKLHLPVHCLVDCDPYGFEILATYRFGSMQMAYDIESLRAPDMKWLGAFPSDSEVYSVPKQCLLPLTEEDKKRTEAMLLRCYLKREMPQWRLELETMLKRGVKFEIEALSVHSLSFLSEVYIPSKIRREVSSP.

Positions 8–142 (SESTNLLQRI…LNVVSVGNGL (135 aa)) constitute a Topo IIA-type catalytic domain. Tyr103 serves as the catalytic O-(5'-phospho-DNA)-tyrosine intermediate. The Mg(2+) site is built by Glu189 and Asp241.

It belongs to the TOP6A family. In terms of assembly, heterotetramer of 2 SPO11 (SPO11-1 and/or SPO11-2) and 2 MTOPVIB chains. Interacts with MTOPVIB. May form a heterodimer with SPO11-2. Interacts with PRD1. Does not interact with TOP6B. It depends on Mg(2+) as a cofactor. Expressed in shoots, young seedlings, flowers and reproductive tissues. Not found in roots or rosette leaves.

Its subcellular location is the nucleus. It carries out the reaction ATP-dependent breakage, passage and rejoining of double-stranded DNA.. Its function is as follows. Component of a topoisomerase 6 complex specifically required for meiotic recombination. Together with MTOPVIB, mediates DNA cleavage that forms the double-strand breaks (DSB) that initiate meiotic recombination. The complex promotes relaxation of negative and positive supercoiled DNA and DNA decatenation through cleavage and ligation cycles. The chain is Meiotic recombination protein SPO11-1 from Arabidopsis thaliana (Mouse-ear cress).